The following is a 231-amino-acid chain: Putative carboxymethylenebutenolidase (231 aa).

Residues Cys-118, Asp-167, and His-199 contribute to the active site.

It belongs to the dienelactone hydrolase family.

It catalyses the reaction 2-(5-oxo-2,5-dihydrofuran-2-ylidene)acetate + H2O = 4-oxohex-2-enedioate + H(+). This is Putative carboxymethylenebutenolidase from Aquifex aeolicus (strain VF5).